A 353-amino-acid polypeptide reads, in one-letter code: tRNA N6-adenosine threonylcarbamoyltransferase (353 aa).

2 residues coordinate Fe cation: histidine 111 and histidine 115. Residues 134 to 138, aspartate 167, glycine 180, aspartate 184, and asparagine 279 contribute to the substrate site; that span reads LVSGG. Fe cation is bound at residue aspartate 307.

It belongs to the KAE1 / TsaD family. Fe(2+) serves as cofactor.

Its subcellular location is the cytoplasm. The catalysed reaction is L-threonylcarbamoyladenylate + adenosine(37) in tRNA = N(6)-L-threonylcarbamoyladenosine(37) in tRNA + AMP + H(+). Required for the formation of a threonylcarbamoyl group on adenosine at position 37 (t(6)A37) in tRNAs that read codons beginning with adenine. Is involved in the transfer of the threonylcarbamoyl moiety of threonylcarbamoyl-AMP (TC-AMP) to the N6 group of A37, together with TsaE and TsaB. TsaD likely plays a direct catalytic role in this reaction. The polypeptide is tRNA N6-adenosine threonylcarbamoyltransferase (Thermosynechococcus vestitus (strain NIES-2133 / IAM M-273 / BP-1)).